Here is a 213-residue protein sequence, read N- to C-terminus: LexA repressor 2 (213 aa).

Positions 27 to 47 form a DNA-binding region, H-T-H motif; that stretch reads QTEIARAFGFKGVRAAQYHLE. Active-site for autocatalytic cleavage activity residues include S133 and K170.

Belongs to the peptidase S24 family. Homodimer.

The catalysed reaction is Hydrolysis of Ala-|-Gly bond in repressor LexA.. In terms of biological role, represses a number of genes involved in the response to DNA damage (SOS response), including recA and lexA. In the presence of single-stranded DNA, RecA interacts with LexA causing an autocatalytic cleavage which disrupts the DNA-binding part of LexA, leading to derepression of the SOS regulon and eventually DNA repair. The sequence is that of LexA repressor 2 from Xanthomonas oryzae pv. oryzae (strain KACC10331 / KXO85).